The following is a 353-amino-acid chain: Holliday junction branch migration complex subunit RuvB (353 aa).

Residues 1–183 (MNEPRIVAPQ…FGATYRLDFY (183 aa)) form a large ATPase domain (RuvB-L) region. ATP contacts are provided by residues Leu22, Arg23, Gly64, Lys67, Thr68, Thr69, 130–132 (EDF), Arg173, Tyr183, and Arg220. Thr68 lines the Mg(2+) pocket. The interval 184–254 (DTAALRAIVE…LARLALDQLA (71 aa)) is small ATPAse domain (RuvB-S). A head domain (RuvB-H) region spans residues 257–353 (ELGLDEVDRL…HAASERSSDA (97 aa)). DNA contacts are provided by Arg312 and Arg317.

It belongs to the RuvB family. As to quaternary structure, homohexamer. Forms an RuvA(8)-RuvB(12)-Holliday junction (HJ) complex. HJ DNA is sandwiched between 2 RuvA tetramers; dsDNA enters through RuvA and exits via RuvB. An RuvB hexamer assembles on each DNA strand where it exits the tetramer. Each RuvB hexamer is contacted by two RuvA subunits (via domain III) on 2 adjacent RuvB subunits; this complex drives branch migration. In the full resolvosome a probable DNA-RuvA(4)-RuvB(12)-RuvC(2) complex forms which resolves the HJ.

It localises to the cytoplasm. It carries out the reaction ATP + H2O = ADP + phosphate + H(+). In terms of biological role, the RuvA-RuvB-RuvC complex processes Holliday junction (HJ) DNA during genetic recombination and DNA repair, while the RuvA-RuvB complex plays an important role in the rescue of blocked DNA replication forks via replication fork reversal (RFR). RuvA specifically binds to HJ cruciform DNA, conferring on it an open structure. The RuvB hexamer acts as an ATP-dependent pump, pulling dsDNA into and through the RuvAB complex. RuvB forms 2 homohexamers on either side of HJ DNA bound by 1 or 2 RuvA tetramers; 4 subunits per hexamer contact DNA at a time. Coordinated motions by a converter formed by DNA-disengaged RuvB subunits stimulates ATP hydrolysis and nucleotide exchange. Immobilization of the converter enables RuvB to convert the ATP-contained energy into a lever motion, pulling 2 nucleotides of DNA out of the RuvA tetramer per ATP hydrolyzed, thus driving DNA branch migration. The RuvB motors rotate together with the DNA substrate, which together with the progressing nucleotide cycle form the mechanistic basis for DNA recombination by continuous HJ branch migration. Branch migration allows RuvC to scan DNA until it finds its consensus sequence, where it cleaves and resolves cruciform DNA. This chain is Holliday junction branch migration complex subunit RuvB, found in Thermomicrobium roseum (strain ATCC 27502 / DSM 5159 / P-2).